We begin with the raw amino-acid sequence, 417 residues long: uncharacterized protein (417 aa).

2 disordered regions span residues 44–83 and 325–346; these read FTNEQNEEDSSNYSTSGYDSSAETISANSSPINRSGVRSR and VQSARKNQKKGRKNRKVEPPKE. Low complexity predominate over residues 54–64; that stretch reads SNYSTSGYDSS. A compositionally biased stretch (polar residues) spans 65-76; the sequence is AETISANSSPIN. The span at 326 to 339 shows a compositional bias: basic residues; that stretch reads QSARKNQKKGRKNR. Residues 362–382 traverse the membrane as a helical segment; sequence FLIIGVYVLVFIYVCTNVLTV.

Its subcellular location is the membrane. This is an uncharacterized protein from Caenorhabditis elegans.